Here is a 125-residue protein sequence, read N- to C-terminus: Multifunctional methyltransferase subunit TRM112-like protein (125 aa).

A TRM112 domain is found at 2–119 (KLLTHNLLSS…SRGIPNMLLN (118 aa)).

This sequence belongs to the TRM112 family. Part of the heterodimeric BUD23-TRM112 methyltransferase complex; this heterodimerization is necessary for the metabolic stability and activity of the catalytic subunit BUD23. Part of the heterodimeric N6AMT1-TRM112 methyltransferase complex; this heterodimerization is necessary for S-adenosyl-L-methionine-binding to N6AMT1/HEMK2. Part of the heterodimeric ALKBH8-TRM112 methyltransferase complex. Part of the heterodimeric METTL5-TRM112 methyltransferase complex; this heterodimerization is necessary for the stability of the catalytic subunit METTL5. Part of the heterodimeric THUMPD3-TRM112 methyltransferase complex; this complex forms an active tRNA methyltransferase, where TRMT112 acts as an activator of the catalytic subunit THUMPD3. Part of the heterodimeric THUMPD2-TRM112 methyltransferase complex; this complex forms an active tRNA methyltransferase, where TRMT112 acts as an activator of the catalytic subunit THUMPD2. Part of the heterodimeric TRMT11-TRM112 methyltransferase complex; this complex forms an active tRNA methyltransferase, where TRMT112 acts as an activator of the catalytic subunit TRMT11. As to expression, abundantly expressed in the testis, also expressed in the brain, heart, kidney, liver, lung, muscle and spleen.

The protein localises to the nucleus. It localises to the nucleoplasm. The protein resides in the cytoplasm. Its subcellular location is the perinuclear region. Functionally, acts as an activator of both rRNA/tRNA and protein methyltransferases. Together with methyltransferase BUD23, methylates the N(7) position of a guanine in 18S rRNA. The heterodimer with HEMK2/N6AMT1 catalyzes N5-methylation of ETF1 on 'Gln-185', using S-adenosyl L-methionine as methyl donor. The heterodimer with ALKBH8 catalyzes the methylation of 5-carboxymethyl uridine to 5-methylcarboxymethyl uridine at the wobble position of the anticodon loop in target tRNA species. Together with methyltransferase THUMPD3, catalyzes the formation of N(2)-methylguanosine at position 6 in a broad range of tRNA substrates and at position 7 of tRNA(Trp). Involved in the pre-rRNA processing steps leading to small-subunit rRNA production. Together with methyltransferase METTL5, specifically methylates the 6th position of adenine in position 1832 of 18S rRNA. This Mus musculus (Mouse) protein is Multifunctional methyltransferase subunit TRM112-like protein (Trmt112).